Here is a 70-residue protein sequence, read N- to C-terminus: DNA-directed RNA polymerase subunit omega (70 aa).

This sequence belongs to the RNA polymerase subunit omega family. As to quaternary structure, the RNAP catalytic core consists of 2 alpha, 1 beta, 1 beta' and 1 omega subunit. When a sigma factor is associated with the core the holoenzyme is formed, which can initiate transcription.

The enzyme catalyses RNA(n) + a ribonucleoside 5'-triphosphate = RNA(n+1) + diphosphate. Functionally, promotes RNA polymerase assembly. Latches the N- and C-terminal regions of the beta' subunit thereby facilitating its interaction with the beta and alpha subunits. The polypeptide is DNA-directed RNA polymerase subunit omega (Staphylococcus epidermidis (strain ATCC 35984 / DSM 28319 / BCRC 17069 / CCUG 31568 / BM 3577 / RP62A)).